Here is a 188-residue protein sequence, read N- to C-terminus: MAAELEGSKCLSGLLSGLAQDTFYGHPGITEELLRSQLYPEVSLEEFRPFLAKMKGILKSIASADMDFNQLEAFLTALTKKQGGITSEQAAVISKFWKSHKTKIRESLMNQSCWDRGLRSLSWRVDGKSQSRHSAQIHTPVAIMELEIGKSGQESEFLCLEFDEVKVNQVLKKLSEVEESISTLMQPA.

The sufficient for interaction with SLC12A2 stretch occupies residues 1–122 (MAAELEGSKC…CWDRGLRSLS (122 aa)). His-100, Met-109, and His-133 together coordinate Cu cation. A COMM domain is found at 117–185 (GLRSLSWRVD…EVEESISTLM (69 aa)). The required for binding to PtdIns(4,5)P2 stretch occupies residues 124–188 (RVDGKSQSRH…ESISTLMQPA (65 aa)).

This sequence belongs to the COMM domain-containing protein 1 family. In terms of assembly, component of the commander complex consisting of the CCC subcomplex and the retriever subcomplex. Component of the CCC (COMMD/CCDC22/CCDC93) subcomplex consisting of COMMD1, COMMD2, COMMD3, COMMD4, COMMD5, COMMD6, COMMD7, COMMD8, COMMD9, COMMD10, CCDC22 and CCDC93; within the complex forms a heterodimer with COMMD6. Interacts with VPS35L; the interaction associates the CCC complex with the retriever complex. Identified in a complex with an E3 ubiquitin ligase complex composed of TCEB1/elongin C, CUL2, SOCS1 and RBX1; in the complex interacts directly with SOCS1 and CUL2. Identified in a complex with NF-kappa-B. Interacts directly with SLC12A2. Interacts directly with ATP7B (via the N-terminal region). Interacts with ATP7A. Interacts with FAM107A; this interaction stabilizes COMMD1 in the nucleus. Interacts with CCS, CDKN2A, RELA, REL, RELB, NFKB1/p105, NFKB2/p100, NFKBIB, SCNN1D, SCNN1B, CFTR, CLU, SGK1, AKT1, CUL1, CUL2, CUL3, CUL4A, CUL4B, CUL5, CUL7, HIF1A. Ubiquitinated; undergoes both 'Lys-63'- and 'Lys-48'-linked polyubiquitination. Ubiquitinated by XIAP, leading to its proteasomal degradation.

Its subcellular location is the nucleus. The protein localises to the cytoplasm. It is found in the endosome membrane. It localises to the cytoplasmic vesicle. The protein resides in the early endosome. Its subcellular location is the recycling endosome. Functionally, scaffold protein in the commander complex that is essential for endosomal recycling of transmembrane cargos; the commander complex is composed of the CCC subcomplex and the retriever subcomplex. Can modulate activity of cullin-RING E3 ubiquitin ligase (CRL) complexes by displacing CAND1; in vitro promotes CRL E3 activity and dissociates CAND1 from CUL1 and CUL2. Promotes ubiquitination of NF-kappa-B subunit RELA and its subsequent proteasomal degradation. Down-regulates NF-kappa-B activity. Involved in the regulation of membrane expression and ubiquitination of SLC12A2. Modulates Na(+) transport in epithelial cells by regulation of apical cell surface expression of amiloride-sensitive sodium channel (ENaC) subunits and by promoting their ubiquitination presumably involving NEDD4L. Promotes the localization of SCNN1D to recycling endosomes. Promotes CFTR cell surface expression through regulation of its ubiquitination. Down-regulates SOD1 activity by interfering with its homodimerization. Plays a role in copper ion homeostasis. Involved in copper-dependent ATP7A trafficking between the trans-Golgi network and vesicles in the cell periphery; the function is proposed to depend on its association within the CCC complex and cooperation with the WASH complex on early endosomes. Can bind one copper ion per monomer. May function to facilitate biliary copper excretion within hepatocytes. Binds to phosphatidylinositol 4,5-bisphosphate (PtdIns(4,5)P2). Involved in the regulation of HIF1A-mediated transcription; competes with ARNT/Hif-1-beta for binding to HIF1A resulting in decreased DNA binding and impaired transcriptional activation by HIF-1. Negatively regulates neuroblastoma G1/S phase cell cycle progression and cell proliferation by stimulating ubiquitination of NF-kappa-B subunit RELA and NF-kappa-B degradation in a FAM107A- and actin-dependent manner. This Bos taurus (Bovine) protein is COMM domain-containing protein 1 (COMMD1).